The following is a 474-amino-acid chain: Nuclear receptor ROR-alpha B (474 aa).

Residues 14-89 constitute a DNA-binding region (nuclear receptor); it reads SIPCKICGDK…VGMSRDAVKF (76 aa). 2 NR C4-type zinc fingers span residues 17 to 37 and 53 to 72; these read CKIC…CEGC and CPRQ…CQHC. Positions 98-124 are enriched in basic and acidic residues; the sequence is DSLFAEVQKHRQQQQDDKTGDESEKNQ. Positions 98 to 144 are disordered; sequence DSLFAEVQKHRQQQQDDKTGDESEKNQESQAPGEAEPLTPSYALSSS. One can recognise an NR LBD domain in the interval 223–461; the sequence is DLEHLSENIC…TRFPPLYKEL (239 aa). The AF-2 stretch occupies residues 450–461; sequence VHTRFPPLYKEL.

Belongs to the nuclear hormone receptor family.

Its subcellular location is the nucleus. Nuclear receptor that binds DNA as a monomer to ROR response elements (RORE). Required for proper cerebellum development. This chain is Nuclear receptor ROR-alpha B (rorab), found in Danio rerio (Zebrafish).